A 979-amino-acid chain; its full sequence is Zinc finger protein 280D (979 aa).

Glycyl lysine isopeptide (Lys-Gly) (interchain with G-Cter in SUMO2) cross-links involve residues lysine 32, lysine 34, lysine 74, and lysine 87. Positions 89 to 101 (TSQHYTNPTSNPV) are enriched in polar residues. The interval 89–119 (TSQHYTNPTSNPVPASPINFHPESRSSDSSV) is disordered. Serine 104 carries the phosphoserine modification. Glycyl lysine isopeptide (Lys-Gly) (interchain with G-Cter in SUMO2) cross-links involve residues lysine 126 and lysine 140. A disordered region spans residues 157–236 (YQGGPTLSMA…TSSNQSKNGT (80 aa)). A compositionally biased stretch (polar residues) spans 169-187 (SESSFLSKRPSTSEVNNVN). Glycyl lysine isopeptide (Lys-Gly) (interchain with G-Cter in SUMO2) cross-links involve residues lysine 189, lysine 210, lysine 223, lysine 233, lysine 275, lysine 284, and lysine 292. The span at 195 to 235 (ESVSGANSSAVLPSVKSPSVTSSQAMLAKGTNTSSNQSKNG) shows a compositional bias: polar residues. 2 C2H2-type zinc fingers span residues 321–343 (FKCF…MKHH) and 358–381 (TTCQ…ESTH). The C2H2-type 3; degenerate zinc-finger motif lies at 388–412 (TICKICELSFETEHVLLQHMKDNHK). 2 C2H2-type zinc fingers span residues 418–441 (YVCQ…RTSH) and 449–469 (CPFC…YMKH). 3 disordered regions span residues 523 to 608 (GPLQ…NKKS), 739 to 809 (LKKE…SDKE), and 896 to 979 (FLRK…KERS). Residues 527 to 541 (SGASPTPSISASAST) show a composition bias toward low complexity. Composition is skewed to polar residues over residues 542-584 (LQLS…NGSK) and 592-608 (SNMQ…NKKS). Residue serine 545 is modified to Phosphoserine. Lysine 550 participates in a covalent cross-link: Glycyl lysine isopeptide (Lys-Gly) (interchain with G-Cter in SUMO2). The segment covering 739-784 (LKKEAPAKEQEPVSKEIARPNMAERETETSNSESKQDKAASSKEKN) has biased composition (basic and acidic residues). Lysine 740 participates in a covalent cross-link: Glycyl lysine isopeptide (Lys-Gly) (interchain with G-Cter in SUMO2). Positions 786-797 (CNANSFEGSSTT) are enriched in polar residues. The span at 798 to 809 (KSEESITVSDKE) shows a compositional bias: basic and acidic residues. A compositionally biased stretch (polar residues) spans 905–914 (SVSSDVSEQG). Serine 908 and serine 911 each carry phosphoserine. Residues 970–979 (VDLEDEKERS) are compositionally biased toward acidic residues. Lysine 976 is covalently cross-linked (Glycyl lysine isopeptide (Lys-Gly) (interchain with G-Cter in SUMO2)).

It is found in the nucleus. In terms of biological role, may function as a transcription factor. The polypeptide is Zinc finger protein 280D (ZNF280D) (Homo sapiens (Human)).